The chain runs to 397 residues: MRYITTHPNEISTQIWNNFSSTEIWSNFSAAKNETQPIRRNQDLANAEVITLAVVIIITVIGNSIVLITLFQRRKKLTRMHLFILHLSVTDLFVAFFNNLPQMIWDITFLFLGTDLLCRLVTYLQSVAMYASSYVLVATAIDRYFAICHPLSSHKWTTARVHVMVFIAWMLSFLFSTPQLFIWSMQFSNIGLTCQATFDPEWTLKFYITWLTVAIWILPTIALTLFYGMMCFAVWKRGRSTLGSSRTRNRSFLTNRVSTRIGQSHLARGFSEEDMEGQSVNYNRGISRAKVRSVALTLSVVACCFICWSPFFVCQMWAAWDENAPYSGAIYTILLLLSSLNSCTNPWIYMIFSVFQHRAKTSRFVNDEETTSVTVLSSRNDIRLMSMKKKLEQTARN.

The Extracellular segment spans residues 1–48 (MRYITTHPNEISTQIWNNFSSTEIWSNFSAAKNETQPIRRNQDLANAE). Residues N18, N27, and N33 are each glycosylated (N-linked (GlcNAc...) asparagine). Residues 49–69 (VITLAVVIIITVIGNSIVLIT) form a helical membrane-spanning segment. Over 70 to 91 (LFQRRKKLTRMHLFILHLSVTD) the chain is Cytoplasmic. The chain crosses the membrane as a helical span at residues 92 to 112 (LFVAFFNNLPQMIWDITFLFL). At 113–120 (GTDLLCRL) the chain is on the extracellular side. C118 and C194 form a disulfide bridge. The chain crosses the membrane as a helical span at residues 121–141 (VTYLQSVAMYASSYVLVATAI). Topologically, residues 142–162 (DRYFAICHPLSSHKWTTARVH) are cytoplasmic. A helical transmembrane segment spans residues 163-183 (VMVFIAWMLSFLFSTPQLFIW). Residues 184 to 205 (SMQFSNIGLTCQATFDPEWTLK) are Extracellular-facing. Residues 206–226 (FYITWLTVAIWILPTIALTLF) traverse the membrane as a helical segment. The Cytoplasmic portion of the chain corresponds to 227–293 (YGMMCFAVWK…RGISRAKVRS (67 aa)). The chain crosses the membrane as a helical span at residues 294 to 314 (VALTLSVVACCFICWSPFFVC). Topologically, residues 315–331 (QMWAAWDENAPYSGAIY) are extracellular. Residues 332–352 (TILLLLSSLNSCTNPWIYMIF) traverse the membrane as a helical segment. The Cytoplasmic portion of the chain corresponds to 353 to 397 (SVFQHRAKTSRFVNDEETTSVTVLSSRNDIRLMSMKKKLEQTARN).

It belongs to the G-protein coupled receptor 1 family. Vasopressin/oxytocin receptor subfamily. In terms of tissue distribution, present in brain, buccal ganglion, gastric ganglion, olfactory lube, peduncle lobe, optical lobe, pancreas, the oviduct and the ovary.

Its subcellular location is the cell membrane. Acts as a receptor for cephalotocin. The chain is Cephalotocin receptor 1 from Octopus vulgaris (Common octopus).